The sequence spans 267 residues: LysM and putative peptidoglycan-binding domain-containing protein 4 (267 aa).

Topologically, residues 1-211 (MRRGDPPPRA…RSNGADWGIQ (211 aa)) are extracellular. Residues 30 to 64 (HRQEEPEASSEDEELNVMELRPRSRDSSSKEKEGV) are disordered. Acidic residues predominate over residues 35 to 45 (PEASSEDEELN). A compositionally biased stretch (basic and acidic residues) spans 49-64 (LRPRSRDSSSKEKEGV). In terms of domain architecture, LysM spans 70-114 (LERDISHEDNLSKLALQYGCKVADIKRVNNLFQEQDMYALKSIKI). Asparagine 79 carries N-linked (GlcNAc...) asparagine glycosylation. A disordered region spans residues 130 to 152 (RTPQQRPSHDAAPSNSAMASVSG). Residues 142 to 152 (PSNSAMASVSG) are compositionally biased toward polar residues. The helical transmembrane segment at 212–232 (WWNAVIAMLLIGIVLPIFYVV) threads the bilayer. The Cytoplasmic portion of the chain corresponds to 233-267 (YYKTKDSGESAVDNVGVNISVSTSNSTREYNGKSP).

The protein resides in the membrane. This Danio rerio (Zebrafish) protein is LysM and putative peptidoglycan-binding domain-containing protein 4 (lysmd4).